The chain runs to 246 residues: Bis(5'-nucleosyl)-tetraphosphatase PrpE [asymmetrical] (246 aa).

This sequence belongs to the PrpE family. Ni(2+) serves as cofactor.

The catalysed reaction is P(1),P(4)-bis(5'-guanosyl) tetraphosphate + H2O = GMP + GTP + 2 H(+). Functionally, asymmetrically hydrolyzes Ap4p to yield AMP and ATP. This Bacillus cereus (strain AH820) protein is Bis(5'-nucleosyl)-tetraphosphatase PrpE [asymmetrical].